The sequence spans 458 residues: Dynein regulatory complex protein 10 (458 aa).

3 coiled-coil regions span residues G96–N137, I209–L255, and Q285–E379. Positions M397–K426 constitute an IQ domain. A disordered region spans residues S419–K458. The span at K428–K445 shows a compositional bias: basic and acidic residues. Over residues E446–K458 the composition is skewed to basic residues.

Belongs to the DRC10 family. Component of the nexin-dynein regulatory complex (N-DRC). Interacts with CFAP52.

The protein resides in the cytoplasm. The protein localises to the cytoskeleton. Its subcellular location is the flagellum axoneme. Functionally, component of the nexin-dynein regulatory complex (N-DRC), a key regulator of ciliary/flagellar motility which maintains the alignment and integrity of the distal axoneme and regulates microtubule sliding in motile axonemes. This Mus musculus (Mouse) protein is Dynein regulatory complex protein 10 (Iqcd).